A 247-amino-acid polypeptide reads, in one-letter code: 2,3-bisphosphoglycerate-dependent phosphoglycerate mutase (247 aa).

Substrate is bound by residues R13–N20, T26–G27, R65, E92–Y95, K103, R119–R120, and G186–N187. H14 functions as the Tele-phosphohistidine intermediate in the catalytic mechanism. The Proton donor/acceptor role is filled by E92.

The protein belongs to the phosphoglycerate mutase family. BPG-dependent PGAM subfamily. Homotetramer, dimer of dimers.

It catalyses the reaction (2R)-2-phosphoglycerate = (2R)-3-phosphoglycerate. Its pathway is carbohydrate degradation; glycolysis; pyruvate from D-glyceraldehyde 3-phosphate: step 3/5. In terms of biological role, catalyzes the interconversion of 2-phosphoglycerate and 3-phosphoglycerate. This chain is 2,3-bisphosphoglycerate-dependent phosphoglycerate mutase, found in Mycobacterium leprae (strain Br4923).